Consider the following 339-residue polypeptide: UDP-N-acetylenolpyruvoylglucosamine reductase (339 aa).

In terms of domain architecture, FAD-binding PCMH-type spans 18-189 (GIDVKARYFS…LRVRFALTRT (172 aa)). The active site involves Arg166. The active-site Proton donor is Ser239. Glu335 is a catalytic residue.

The protein belongs to the MurB family. It depends on FAD as a cofactor.

It is found in the cytoplasm. It catalyses the reaction UDP-N-acetyl-alpha-D-muramate + NADP(+) = UDP-N-acetyl-3-O-(1-carboxyvinyl)-alpha-D-glucosamine + NADPH + H(+). Its pathway is cell wall biogenesis; peptidoglycan biosynthesis. In terms of biological role, cell wall formation. This chain is UDP-N-acetylenolpyruvoylglucosamine reductase, found in Pseudomonas putida (strain ATCC 47054 / DSM 6125 / CFBP 8728 / NCIMB 11950 / KT2440).